The sequence spans 111 residues: Resistin-like beta (111 aa).

A signal peptide spans 1–23; it reads MGPSSCLLLILIPLLQLINPGST. 5 disulfide bridges follow: C55-C108, C67-C107, C76-C93, C78-C95, and C82-C97.

Belongs to the resistin/FIZZ family. Homodimer; disulfide-linked. Expressed only in the gastrointestinal tract, particularly the colon.

Its subcellular location is the secreted. Probable hormone. This chain is Resistin-like beta (RETNLB), found in Homo sapiens (Human).